The sequence spans 459 residues: Sperm-tail PG-rich repeat-containing protein 2 (459 aa).

9 STPGR repeats span residues 21–30 (VGPGSYQVPF), 63–73 (PGPGHYNVSEA), 119–148 (TLGP…NSSG), 157–203 (GPGP…QEKK), 213–243 (TPAP…FGQS), 257–268 (PGPGFYNVLNNT), 351–377 (PAPG…PRSL), 400–410 (GPGPAAYNPVL), and 433–443 (TPGPATYEISQ).

The chain is Sperm-tail PG-rich repeat-containing protein 2 (STPG2) from Homo sapiens (Human).